The primary structure comprises 151 residues: MPLYEHVFLARQDVTAQQVETMVETYKGVIETGGGTIEKIESWGVKSLAYRIKKNRKAHFTLLNISAPPAALAEMERQMQISEDVLRFMTVRVEQLEAEPSAMMQKRDRDDRKDRDRGDRPRRRDDDFGGGDRGDRGDRGDRPERNFGGEN.

The interval 97–151 (EAEPSAMMQKRDRDDRKDRDRGDRPRRRDDDFGGGDRGDRGDRGDRPERNFGGEN) is disordered. Basic and acidic residues predominate over residues 105-151 (QKRDRDDRKDRDRGDRPRRRDDDFGGGDRGDRGDRGDRPERNFGGEN).

It belongs to the bacterial ribosomal protein bS6 family.

In terms of biological role, binds together with bS18 to 16S ribosomal RNA. This Methylorubrum populi (strain ATCC BAA-705 / NCIMB 13946 / BJ001) (Methylobacterium populi) protein is Small ribosomal subunit protein bS6.